Reading from the N-terminus, the 204-residue chain is Large ribosomal subunit protein uL4 (204 aa).

Positions 49–72 are disordered; sequence QKNRAAVSGGGKKPWRQKGTGRAR.

This sequence belongs to the universal ribosomal protein uL4 family. As to quaternary structure, part of the 50S ribosomal subunit.

Its function is as follows. One of the primary rRNA binding proteins, this protein initially binds near the 5'-end of the 23S rRNA. It is important during the early stages of 50S assembly. It makes multiple contacts with different domains of the 23S rRNA in the assembled 50S subunit and ribosome. Functionally, forms part of the polypeptide exit tunnel. The protein is Large ribosomal subunit protein uL4 of Saccharophagus degradans (strain 2-40 / ATCC 43961 / DSM 17024).